We begin with the raw amino-acid sequence, 518 residues long: Probable Xaa-Pro aminopeptidase HCDG_07916 (518 aa).

Residues aspartate 289, aspartate 300, glutamate 437, and glutamate 475 each contribute to the Mn(2+) site.

The protein belongs to the peptidase M24B family. Requires Mn(2+) as cofactor.

The enzyme catalyses Release of any N-terminal amino acid, including proline, that is linked to proline, even from a dipeptide or tripeptide.. In terms of biological role, catalyzes the removal of a penultimate prolyl residue from the N-termini of peptides. This Ajellomyces capsulatus (strain H143) (Darling's disease fungus) protein is Probable Xaa-Pro aminopeptidase HCDG_07916.